Reading from the N-terminus, the 568-residue chain is Urease subunit alpha (568 aa).

The Urease domain maps to 130 to 568; it reads GGIDSHIHFI…LPMAQRYFLF (439 aa). His135, His137, and Lys218 together coordinate Ni(2+). The residue at position 218 (Lys218) is an N6-carboxylysine. Residue His220 coordinates substrate. Ni(2+) is bound by residues His247 and His273. The active-site Proton donor is His321. A Ni(2+)-binding site is contributed by Asp361.

This sequence belongs to the metallo-dependent hydrolases superfamily. Urease alpha subunit family. As to quaternary structure, heterotrimer of UreA (gamma), UreB (beta) and UreC (alpha) subunits. Three heterotrimers associate to form the active enzyme. Ni cation serves as cofactor. Carboxylation allows a single lysine to coordinate two nickel ions.

The protein localises to the cytoplasm. The catalysed reaction is urea + 2 H2O + H(+) = hydrogencarbonate + 2 NH4(+). It participates in nitrogen metabolism; urea degradation; CO(2) and NH(3) from urea (urease route): step 1/1. This Nitrosospira multiformis (strain ATCC 25196 / NCIMB 11849 / C 71) protein is Urease subunit alpha.